A 160-amino-acid polypeptide reads, in one-letter code: SsrA-binding protein (160 aa).

It belongs to the SmpB family.

It localises to the cytoplasm. Functionally, required for rescue of stalled ribosomes mediated by trans-translation. Binds to transfer-messenger RNA (tmRNA), required for stable association of tmRNA with ribosomes. tmRNA and SmpB together mimic tRNA shape, replacing the anticodon stem-loop with SmpB. tmRNA is encoded by the ssrA gene; the 2 termini fold to resemble tRNA(Ala) and it encodes a 'tag peptide', a short internal open reading frame. During trans-translation Ala-aminoacylated tmRNA acts like a tRNA, entering the A-site of stalled ribosomes, displacing the stalled mRNA. The ribosome then switches to translate the ORF on the tmRNA; the nascent peptide is terminated with the 'tag peptide' encoded by the tmRNA and targeted for degradation. The ribosome is freed to recommence translation, which seems to be the essential function of trans-translation. This Yersinia pseudotuberculosis serotype O:1b (strain IP 31758) protein is SsrA-binding protein.